The primary structure comprises 305 residues: Phosphatidate cytidylyltransferase (305 aa).

A run of 8 helical transmembrane segments spans residues 27–47 (FLVI…VGLL), 67–87 (FPFS…ALTC), 96–116 (FPEH…IRLV), 124–144 (LGPI…SVPI), 150–170 (ILYG…AIFL), 202–222 (TVVG…LFYS), 232–252 (IAVP…GFFG), and 277–297 (MLDV…ILLI).

Belongs to the CDS family.

The protein localises to the cell membrane. The enzyme catalyses a 1,2-diacyl-sn-glycero-3-phosphate + CTP + H(+) = a CDP-1,2-diacyl-sn-glycerol + diphosphate. It participates in phospholipid metabolism; CDP-diacylglycerol biosynthesis; CDP-diacylglycerol from sn-glycerol 3-phosphate: step 3/3. In Chlamydia trachomatis serovar D (strain ATCC VR-885 / DSM 19411 / UW-3/Cx), this protein is Phosphatidate cytidylyltransferase (cdsA).